A 141-amino-acid chain; its full sequence is Large ribosomal subunit protein uL14 (141 aa).

This sequence belongs to the universal ribosomal protein uL14 family. Part of the 50S ribosomal subunit. Forms a cluster with proteins L3 and L24e, part of which may contact the 16S rRNA in 2 intersubunit bridges.

Its function is as follows. Binds to 23S rRNA. Forms part of two intersubunit bridges in the 70S ribosome. The protein is Large ribosomal subunit protein uL14 of Pyrococcus abyssi (strain GE5 / Orsay).